A 465-amino-acid polypeptide reads, in one-letter code: Neutrophil collagenase (465 aa).

Positions 1–20 are cleaved as a signal peptide; sequence MFRLKTLPLLIFLHTQLANA. Residues 21 to 100 constitute a propeptide, activation peptide; sequence FPVPEHLEEK…CGVPDSGDFL (80 aa). Residue N55 is glycosylated (N-linked (GlcNAc...) asparagine). The Cysteine switch signature appears at 89–96; the sequence is PRCGVPDS. C91 is a Zn(2+) binding site. Residue N112 is glycosylated (N-linked (GlcNAc...) asparagine). Ca(2+) is bound at residue D157. Residues H167 and D169 each contribute to the Zn(2+) site. The Ca(2+) site is built by D174, G175, N177, and I179. H182 is a Zn(2+) binding site. G189, G191, and D193 together coordinate Ca(2+). H195 is a Zn(2+) binding site. Positions 197 and 200 each coordinate Ca(2+). H217 contributes to the Zn(2+) binding site. Residue E218 is part of the active site. Residues H221 and H227 each contribute to the Zn(2+) site. 4 Hemopexin repeats span residues 276–325, 326–372, 374–420, and 421–464; these read PKAC…WPFL, PNGL…GFPR, VQAI…FPGV, and NCRV…WLNC. The cysteines at positions 279 and 464 are disulfide-linked. D286 provides a ligand contact to Ca(2+). Ca(2+)-binding residues include D378 and D425.

Belongs to the peptidase M10A family. Requires Ca(2+) as cofactor. Zn(2+) serves as cofactor. As to expression, neutrophils. Expressed in uterus. Low levels in kidney and muscle.

The protein localises to the cytoplasmic granule. It localises to the secreted. It is found in the extracellular space. Its subcellular location is the extracellular matrix. It carries out the reaction Cleavage of interstitial collagens in the triple helical domain. Unlike EC 3.4.24.7, this enzyme cleaves type III collagen more slowly than type I.. With respect to regulation, cannot be activated without removal of the activation peptide. Activated by matrilysin. Its function is as follows. Can degrade fibrillar type I, II, and III collagens. May play a role in the degradation of collagen fibers during uterine involution. The polypeptide is Neutrophil collagenase (Mmp8) (Mus musculus (Mouse)).